The sequence spans 377 residues: Succinyl-diaminopimelate desuccinylase (377 aa).

Residue H67 coordinates Zn(2+). D69 is an active-site residue. Position 100 (D100) interacts with Zn(2+). Catalysis depends on E134, which acts as the Proton acceptor. Zn(2+)-binding residues include E135, E163, and H349.

The protein belongs to the peptidase M20A family. DapE subfamily. Homodimer. Zn(2+) is required as a cofactor. The cofactor is Co(2+).

The enzyme catalyses N-succinyl-(2S,6S)-2,6-diaminopimelate + H2O = (2S,6S)-2,6-diaminopimelate + succinate. It participates in amino-acid biosynthesis; L-lysine biosynthesis via DAP pathway; LL-2,6-diaminopimelate from (S)-tetrahydrodipicolinate (succinylase route): step 3/3. In terms of biological role, catalyzes the hydrolysis of N-succinyl-L,L-diaminopimelic acid (SDAP), forming succinate and LL-2,6-diaminopimelate (DAP), an intermediate involved in the bacterial biosynthesis of lysine and meso-diaminopimelic acid, an essential component of bacterial cell walls. The polypeptide is Succinyl-diaminopimelate desuccinylase (Haemophilus influenzae (strain 86-028NP)).